A 329-amino-acid polypeptide reads, in one-letter code: Phenylalanine--tRNA ligase alpha subunit (329 aa).

Glutamate 254 lines the Mg(2+) pocket.

The protein belongs to the class-II aminoacyl-tRNA synthetase family. Phe-tRNA synthetase alpha subunit type 1 subfamily. Tetramer of two alpha and two beta subunits. Requires Mg(2+) as cofactor.

It localises to the cytoplasm. It carries out the reaction tRNA(Phe) + L-phenylalanine + ATP = L-phenylalanyl-tRNA(Phe) + AMP + diphosphate + H(+). The sequence is that of Phenylalanine--tRNA ligase alpha subunit from Histophilus somni (strain 2336) (Haemophilus somnus).